The sequence spans 77 residues: Acyl carrier protein (77 aa).

The region spanning 1 to 76 is the Carrier domain; sequence MADFEKIKSI…DVIKFIDKLK (76 aa). Residue Ser-36 is modified to O-(pantetheine 4'-phosphoryl)serine.

This sequence belongs to the acyl carrier protein (ACP) family. 4'-phosphopantetheine is transferred from CoA to a specific serine of apo-ACP by AcpS. This modification is essential for activity because fatty acids are bound in thioester linkage to the sulfhydryl of the prosthetic group.

It localises to the cytoplasm. The protein operates within lipid metabolism; fatty acid biosynthesis. In terms of biological role, carrier of the growing fatty acid chain in fatty acid biosynthesis. This is Acyl carrier protein from Leptospira biflexa serovar Patoc (strain Patoc 1 / Ames).